Reading from the N-terminus, the 1208-residue chain is Lysine-specific demethylase JMJ17 (1208 aa).

A PHD-type 1; degenerate zinc finger spans residues 1–36; that stretch reads MLLCDSCNKGWHIYCLSPPLKHIPLGNWYCLECLNT. Positions 4, 7, 30, and 33 each coordinate Zn(2+). Residues 126-292 enclose the JmjC domain; the sequence is EYCGSPWNLN…YGGSGAELYR (167 aa). Residues histidine 172, glutamate 174, and histidine 260 each coordinate Fe cation. The Zn(2+) site is built by cysteine 369, cysteine 372, cysteine 383, cysteine 385, cysteine 392, histidine 395, cysteine 400, and cysteine 402. A C5HC2 zinc finger spans residues 369-421; it reads CIICQQFLHLSAIVCNCRPSVFACLEHWKHLCECEPTKLRLEYRYTLAELDMM. Positions 613 to 620 match the Nuclear localization signal motif; sequence SKKISSAK. The segment at 1099–1145 adopts a PHD-type 2 zinc-finger fold; that stretch reads MLHCICLKPYNSRSMVSCSQCGEWYHTYCLKLHWRPKAYVCSACCPL. Positions 1102, 1104, 1116, 1119, 1124, 1127, 1139, and 1142 each coordinate Zn(2+).

This sequence belongs to the JARID1 histone demethylase family. Fe(2+) serves as cofactor. In terms of tissue distribution, expressed in inflorescences, roots, seedlings and siliques, and, at low levels, in leaves and stems.

It is found in the nucleus. It carries out the reaction N(6),N(6),N(6)-trimethyl-L-lysyl(4)-[histone H3] + 2-oxoglutarate + O2 = N(6),N(6)-dimethyl-L-lysyl(4)-[histone H3] + formaldehyde + succinate + CO2. The enzyme catalyses N(6),N(6)-dimethyl-L-lysyl(4)-[histone H3] + 2-oxoglutarate + O2 = N(6)-methyl-L-lysyl(4)-[histone H3] + formaldehyde + succinate + CO2. It catalyses the reaction N(6)-methyl-L-lysyl(4)-[histone H3] + 2-oxoglutarate + O2 = L-lysyl(4)-[histone H3] + formaldehyde + succinate + CO2. The catalysed reaction is N(6),N(6),N(6)-trimethyl-L-lysyl(4)-[histone H3] + 3 2-oxoglutarate + 3 O2 = L-lysyl(4)-[histone H3] + 3 formaldehyde + 3 succinate + 3 CO2. In terms of biological role, functions as a histone H3 'Lys-4' (H3K4me) demethylase involved in the regulation of gene expression. Active on H3K4me1, H3K4me2 and H3K4me3. Repressor of the abscisic acid (ABA) signaling pathway, especially during stomatal closure regulation. Negative regulator of responses to dehydration stress by binding directly to the chromatin of SRK2E/OST1 and demethylating H3K4me3 to regulates its expression. Together with JMJ14 and JMJ16, required for plant growth and development. This is Lysine-specific demethylase JMJ17 from Arabidopsis thaliana (Mouse-ear cress).